A 589-amino-acid polypeptide reads, in one-letter code: LRR receptor-like serine/threonine-protein kinase FEI 2 (589 aa).

Residues 1-28 (MGICLMKRCCSWFLLISFLSALTNENEA) form the signal peptide. At 29–236 (ISPDGEALLS…TGQGGNNPKR (208 aa)) the chain is on the extracellular side. LRR repeat units lie at residues 72–96 (TKRV…LGKL), 97–120 (DQLR…LGNC), 122–144 (ALEG…IGNL), 145–168 (SGLK…LGQL), and 170–193 (RLTK…LLAR). Asn119 and Asn143 each carry an N-linked (GlcNAc...) asparagine glycan. Asn175, Asn215, and Asn219 each carry an N-linked (GlcNAc...) asparagine glycan. A helical membrane pass occupies residues 237–257 (LLISASATVGGLLLVALMCFW). The Cytoplasmic portion of the chain corresponds to 258–589 (GCFLYKKLGR…PSDFYDSSSD (332 aa)). The 273-residue stretch at 304 to 576 (LNEEHIIGCG…VVQLLESEVM (273 aa)) folds into the Protein kinase domain. Residues 310 to 318 (IGCGGFGTV) and Lys332 each bind ATP. Ser384 bears the Phosphoserine mark. Asp427 functions as the Proton acceptor in the catalytic mechanism. A phosphothreonine mark is found at Thr460, Thr461, and Thr466. Tyr474 carries the phosphotyrosine modification.

Belongs to the protein kinase superfamily. Ser/Thr protein kinase family. In terms of assembly, interacts with the ACC synthases ACS5 and ACS9 but not ACS2, via the kinase domain. In terms of processing, autophosphorylated. As to expression, expressed in the root meristem and elongation zone, and in hypocotyls of etiolated seedlings.

It is found in the cell membrane. It carries out the reaction L-seryl-[protein] + ATP = O-phospho-L-seryl-[protein] + ADP + H(+). It catalyses the reaction L-threonyl-[protein] + ATP = O-phospho-L-threonyl-[protein] + ADP + H(+). Functionally, involved in the signaling pathway that regulates cell wall function, including cellulose biosynthesis, likely via an 1-aminocyclopropane-1-carboxylic acid (ACC)-mediated signal (a precursor of ethylene). The sequence is that of LRR receptor-like serine/threonine-protein kinase FEI 2 (FEI2) from Arabidopsis thaliana (Mouse-ear cress).